The following is a 260-amino-acid chain: Hydroxyethylthiazole kinase (260 aa).

Met36 contributes to the substrate binding site. Residues Arg112 and Thr157 each coordinate ATP. Gly184 provides a ligand contact to substrate.

Belongs to the Thz kinase family. Mg(2+) is required as a cofactor.

The catalysed reaction is 5-(2-hydroxyethyl)-4-methylthiazole + ATP = 4-methyl-5-(2-phosphooxyethyl)-thiazole + ADP + H(+). Its pathway is cofactor biosynthesis; thiamine diphosphate biosynthesis; 4-methyl-5-(2-phosphoethyl)-thiazole from 5-(2-hydroxyethyl)-4-methylthiazole: step 1/1. Its function is as follows. Catalyzes the phosphorylation of the hydroxyl group of 4-methyl-5-beta-hydroxyethylthiazole (THZ). In Shouchella clausii (strain KSM-K16) (Alkalihalobacillus clausii), this protein is Hydroxyethylthiazole kinase.